A 291-amino-acid chain; its full sequence is U7 snRNA-associated Sm-like protein LSm11 (291 aa).

The interval A55–E84 is disordered. The Sm domain maps to S124 to L199. The tract at residues G155 to I289 is SM. The interval E203–Y266 is disordered. Residues N251–K261 show a composition bias toward basic residues.

Belongs to the snRNP Sm proteins family. As to quaternary structure, component of the heptameric ring U7 snRNP complex.

It is found in the nucleus. Its function is as follows. Component of the U7 snRNP complex that is involved in the histone 3'-end pre-mRNA processing. Increases U7 snRNA levels but not histone 3'-end pre-mRNA processing activity, when overexpressed. Binds specifically to the Sm-binding site of U7 snRNA. This is U7 snRNA-associated Sm-like protein LSm11 from Xenopus laevis (African clawed frog).